The following is a 199-amino-acid chain: dTTP/UTP pyrophosphatase (199 aa).

The Proton acceptor role is filled by Asp79.

It belongs to the Maf family. YhdE subfamily. It depends on a divalent metal cation as a cofactor.

The protein localises to the cytoplasm. The enzyme catalyses dTTP + H2O = dTMP + diphosphate + H(+). It catalyses the reaction UTP + H2O = UMP + diphosphate + H(+). Its function is as follows. Nucleoside triphosphate pyrophosphatase that hydrolyzes dTTP and UTP. May have a dual role in cell division arrest and in preventing the incorporation of modified nucleotides into cellular nucleic acids. The chain is dTTP/UTP pyrophosphatase from Porphyromonas gingivalis (strain ATCC 33277 / DSM 20709 / CIP 103683 / JCM 12257 / NCTC 11834 / 2561).